We begin with the raw amino-acid sequence, 225 residues long: Thymidine kinase (225 aa).

An ATP-binding site is contributed by 15 to 22 (GSMFSGKT). The interval 85–110 (KKQNHRTTTQCRSGDGTNNPGGVIPS) is disordered. Over residues 90-104 (RTTTQCRSGDGTNNP) the composition is skewed to polar residues. 121-124 (DEAN) serves as a coordination point for ATP. Glu-122 acts as the Proton acceptor in catalysis. Residues Cys-178, Cys-181, Cys-216, and Cys-219 each contribute to the Zn(2+) site.

This sequence belongs to the thymidine kinase family. In terms of assembly, homotetramer.

Its subcellular location is the cytoplasm. It catalyses the reaction thymidine + ATP = dTMP + ADP + H(+). In Haloquadratum walsbyi (strain DSM 16790 / HBSQ001), this protein is Thymidine kinase.